The sequence spans 217 residues: Uridylate kinase (217 aa).

Lys6 to Arg10 contributes to the ATP binding site. Gly38 serves as a coordination point for UMP. Residues Gly39 and Arg43 each contribute to the ATP site. UMP-binding positions include Asp60 and Phe107–Thr113. The ATP site is built by Asn134, Tyr139, and Asp142.

This sequence belongs to the UMP kinase family. In terms of assembly, homohexamer.

The protein localises to the cytoplasm. The enzyme catalyses UMP + ATP = UDP + ADP. It functions in the pathway pyrimidine metabolism; CTP biosynthesis via de novo pathway; UDP from UMP (UMPK route): step 1/1. Its activity is regulated as follows. Inhibited by UTP. In terms of biological role, catalyzes the reversible phosphorylation of UMP to UDP. The chain is Uridylate kinase from Pyrobaculum islandicum (strain DSM 4184 / JCM 9189 / GEO3).